Reading from the N-terminus, the 527-residue chain is Pyruvate kinase 2, cytosolic (527 aa).

Arg-58 lines the substrate pocket. Asp-60, Ser-62, Asp-92, and Thr-93 together coordinate K(+). 60–63 (DFSW) lines the ATP pocket. Position 256 (Lys-256) interacts with substrate. Position 258 (Glu-258) interacts with Mg(2+). Substrate contacts are provided by Gly-281, Asn-282, and Thr-313. Position 282 (Asn-282) interacts with Mg(2+).

It belongs to the pyruvate kinase family. As to quaternary structure, homotetramer. It depends on Mg(2+) as a cofactor. Requires K(+) as cofactor.

Its subcellular location is the cytoplasm. The protein resides in the cytosol. The enzyme catalyses pyruvate + ATP = phosphoenolpyruvate + ADP + H(+). The protein operates within carbohydrate degradation; glycolysis; pyruvate from D-glyceraldehyde 3-phosphate: step 5/5. Key regulatory enzyme of the glycolytic pathway that catalyzes the final step of glycolysis, converting ADP and phosphoenolpyruvate (PEP) to ATP and pyruvate by essentially irreversible transphosphorylation. This is Pyruvate kinase 2, cytosolic from Oryza sativa subsp. indica (Rice).